A 335-amino-acid polypeptide reads, in one-letter code: Ornithine carbamoyltransferase (335 aa).

Carbamoyl phosphate is bound by residues 56–59 (STRT), Q83, R107, and 134–137 (HPTQ). L-ornithine is bound by residues N168, D232, and 236-237 (SM). Carbamoyl phosphate is bound by residues 274 to 275 (CL) and R320.

This sequence belongs to the aspartate/ornithine carbamoyltransferase superfamily. OTCase family.

The protein resides in the cytoplasm. The catalysed reaction is carbamoyl phosphate + L-ornithine = L-citrulline + phosphate + H(+). It participates in amino-acid biosynthesis; L-arginine biosynthesis; L-arginine from L-ornithine and carbamoyl phosphate: step 1/3. Its function is as follows. Reversibly catalyzes the transfer of the carbamoyl group from carbamoyl phosphate (CP) to the N(epsilon) atom of ornithine (ORN) to produce L-citrulline. The chain is Ornithine carbamoyltransferase from Pectobacterium atrosepticum (strain SCRI 1043 / ATCC BAA-672) (Erwinia carotovora subsp. atroseptica).